Reading from the N-terminus, the 186-residue chain is Large ribosomal subunit protein uL5 (186 aa).

This sequence belongs to the universal ribosomal protein uL5 family. In terms of assembly, part of the 50S ribosomal subunit; part of the 5S rRNA/L5/L18/L25 subcomplex. Contacts the 5S rRNA and the P site tRNA. Forms a bridge to the 30S subunit in the 70S ribosome.

Functionally, this is one of the proteins that bind and probably mediate the attachment of the 5S RNA into the large ribosomal subunit, where it forms part of the central protuberance. In the 70S ribosome it contacts protein S13 of the 30S subunit (bridge B1b), connecting the 2 subunits; this bridge is implicated in subunit movement. Contacts the P site tRNA; the 5S rRNA and some of its associated proteins might help stabilize positioning of ribosome-bound tRNAs. In Ruegeria pomeroyi (strain ATCC 700808 / DSM 15171 / DSS-3) (Silicibacter pomeroyi), this protein is Large ribosomal subunit protein uL5.